The sequence spans 541 residues: Chlorophyllide a oxygenase, chloroplastic (541 aa).

Residues 114 to 151 (LAREFKSIGTLRKELAELQEELAKAHNQVHLSETRVSS) are a coiled coil. Residues 178–192 (AECTSLAPSTSSASR) show a composition bias toward polar residues. A disordered region spans residues 178–208 (AECTSLAPSTSSASRVVNKKPPRRSLNVSGP). One can recognise a Rieske domain in the interval 220-320 (WYPVAFSSDL…CFEQEGMVWI (101 aa)). Residues C261, H263, C280, and H283 each contribute to the [2Fe-2S] cluster site. 4 residues coordinate Fe cation: D359, D363, H366, and H371.

In terms of tissue distribution, expressed in leaves and germinating seedlings, but not in sheaths and roots.

It localises to the plastid. It is found in the chloroplast membrane. The protein resides in the chloroplast thylakoid membrane. The enzyme catalyses chlorophyllide a + 2 NADPH + 2 O2 + 2 H(+) = chlorophyllide b + 2 NADP(+) + 3 H2O. Functionally, catalyzes a two-step oxygenase reaction involved in the synthesis of chlorophyll b. Acts specifically on the non-esterified chlorophyllide a and not on chlorophyll a. This chain is Chlorophyllide a oxygenase, chloroplastic (CAO), found in Oryza sativa subsp. japonica (Rice).